An 86-amino-acid polypeptide reads, in one-letter code: Probable acyl carrier protein CCNA_01221 (86 aa).

The Carrier domain maps to 6–83 (TVTDLSLREI…DLSKLINDLR (78 aa)). Ser43 carries the post-translational modification O-(pantetheine 4'-phosphoryl)serine.

Belongs to the acyl carrier protein (ACP) family.

It participates in lipid metabolism; sphingolipid metabolism. Functionally, involved in de novo bacterial ceramide synthesis. This Caulobacter vibrioides (strain NA1000 / CB15N) (Caulobacter crescentus) protein is Probable acyl carrier protein CCNA_01221.